Consider the following 457-residue polypeptide: Multidrug resistance protein MdtK (457 aa).

Helical transmembrane passes span 11-31 (LLAL…MGFV), 53-73 (IWLP…PVIA), 93-113 (WLAG…GYII), 127-147 (AVGY…FQVA), 160-180 (GMVI…IFIY), 188-208 (LGGV…FIAM), 243-263 (LPIA…ALLV), 276-296 (IALN…AAVT), 314-334 (AART…IFTV), 357-377 (LMLL…GSGI), 387-407 (IFFI…YILA), and 418-438 (PAGF…MMML).

Belongs to the multi antimicrobial extrusion (MATE) (TC 2.A.66.1) family. MdtK subfamily.

The protein localises to the cell inner membrane. Functionally, multidrug efflux pump that functions probably as a Na(+)/drug antiporter. The sequence is that of Multidrug resistance protein MdtK from Citrobacter koseri (strain ATCC BAA-895 / CDC 4225-83 / SGSC4696).